Here is a 591-residue protein sequence, read N- to C-terminus: Probable sulfoacetaldehyde acetyltransferase (591 aa).

The tract at residues Met-359–Ser-383 is disordered.

The protein belongs to the TPP enzyme family. Mg(2+) is required as a cofactor. Thiamine diphosphate serves as cofactor.

It localises to the cytoplasm. The catalysed reaction is acetyl phosphate + sulfite + H(+) = sulfoacetaldehyde + phosphate. The protein operates within organosulfur degradation; taurine degradation via aerobic pathway; acetyl phosphate and sulfite from taurine: step 2/2. This Rhizobium meliloti (strain 1021) (Ensifer meliloti) protein is Probable sulfoacetaldehyde acetyltransferase (xsc).